The sequence spans 1035 residues: Kinesin-like protein KIN-4A (1035 aa).

Residues 10-369 (CVKVAVHVRP…LKYANRARNI (360 aa)) enclose the Kinesin motor domain. ATP is bound at residue 89-96 (GQTGSGKT). 2 coiled-coil regions span residues 380 to 437 (VADE…LRNH) and 498 to 702 (MLQD…RKSS). 3 disordered regions span residues 697–720 (EARK…HMTE), 766–787 (VMSG…NTLS), and 882–928 (HSES…PLSP). Composition is skewed to polar residues over residues 704–716 (RDNS…SPGS) and 778–787 (NGNSRANTLS). Positions 850-904 (NVAADARCQVREKEMEIKEMKEQMTELVTILRHSESRRRETEKQLKQREQAAVTA) form a coiled coil. Positions 882-898 (HSESRRRETEKQLKQRE) are enriched in basic and acidic residues. Polar residues predominate over residues 902–926 (VTATTSPGNGNGSVKHSADDSNTPL). Positions 971-987 (KKVSIAGQSGKLWRWKR) match the Nuclear localization signal motif. A disordered region spans residues 1014–1035 (DETMTRTRPRPQLLPHRPQRVM).

The protein belongs to the TRAFAC class myosin-kinesin ATPase superfamily. Kinesin family. KIN-4 subfamily. Homodimer. In terms of tissue distribution, expressed in young tissues with cell divisions, including initiating adventitious roots, primary root tips, flower primordia, intercalary meristems, sub-epidermal regions of young culms and panicles.

The protein localises to the nucleus. The protein resides in the cytoplasm. Its subcellular location is the cytoskeleton. Its activity is regulated as follows. May be regulated by cyclin-dependent kinase A. Microtubule-dependent motor protein involved in the control of the oriented deposition of cellulose microfibrils. Involved in wall biogenesis and modification, and contributes to cell-cycle progression and cell division. Acts as a transcriptional activator in gibberellic acid (GA) biosynthesis pathway. Binds specifically to the DNA sequence 5'-ACCAACTTGAA-3' of the ent-kaurene oxidase 2 (CYP701A6 or OsKO2) promoter. May regulate CYP701A6 gene expression and mediates cell elongation by regulating the GA biosynthesis pathway. This is Kinesin-like protein KIN-4A from Oryza sativa subsp. japonica (Rice).